Here is a 482-residue protein sequence, read N- to C-terminus: Retrovirus-related Pol polyprotein from type-1 retrotransposable element R2 (482 aa).

The Reverse transcriptase domain maps to 1–84 (AYADDLILFA…DYFKYLGSRY (84 aa)). Residues 208–482 (QIPAVEKFYQ…ATGGRGRGDI (275 aa)) form a nucleic acid-binding endonuclease region.

It carries out the reaction DNA(n) + a 2'-deoxyribonucleoside 5'-triphosphate = DNA(n+1) + diphosphate. The protein is Retrovirus-related Pol polyprotein from type-1 retrotransposable element R2 of Popillia japonica (Japanese beetle).